The primary structure comprises 186 residues: Putative 5'(3')-deoxyribonucleotidase (186 aa).

This sequence belongs to the 5'(3')-deoxyribonucleotidase family. Requires Mg(2+) as cofactor.

Dephosphorylates the 5' and 2'(3')-phosphates of deoxyribonucleotides. The sequence is that of Putative 5'(3')-deoxyribonucleotidase from Bordetella parapertussis (strain 12822 / ATCC BAA-587 / NCTC 13253).